We begin with the raw amino-acid sequence, 497 residues long: Probable small intestine urate exporter (497 aa).

N-linked (GlcNAc...) asparagine glycosylation is found at asparagine 47, asparagine 56, asparagine 66, asparagine 75, and asparagine 90. 10 consecutive transmembrane segments (helical) span residues 149-169 (SFLT…LIVL), 171-191 (IVQG…WVKW), 203-223 (IAGS…GLLC), 230-250 (YVFY…FPLI), 292-312 (LPLW…YTIM), 332-352 (ILSA…GLLA), 368-388 (KLFT…LPWV), 398-418 (FLVL…VNFL), 431-451 (LLQV…GFFI), and 461-481 (NVFL…LIFG).

The protein belongs to the major facilitator superfamily. Sodium/anion cotransporter family. As to expression, abundantly expressed in pancreas, liver, colon and small intestine, less in kidney. Not detected in the adrenal glands, brain, placenta, heart, testis, skeletal muscle, and lungs.

Its subcellular location is the apical cell membrane. The enzyme catalyses 3 Na(+)(out) + phosphate(out) = 3 Na(+)(in) + phosphate(in). The catalysed reaction is urate(out) + n chloride(in) = urate(in) + n chloride(out). It carries out the reaction L-thyroxine(out) = L-thyroxine(in). It catalyses the reaction 3,3',5-triiodo-L-thyronine(out) = 3,3',5-triiodo-L-thyronine(in). Acts as a membrane potential-dependent organic anion transporter, the transport requires a low concentration of chloride ions. Mediates chloride-dependent transport of urate. Mediates sodium-independent high affinity transport of thyroid hormones including L-thyroxine (T4) and 3,3',5-triiodo-L-thyronine (T3). Can actively transport inorganic phosphate into cells via Na(+) cotransport. This Homo sapiens (Human) protein is Probable small intestine urate exporter (SLC17A4).